The following is a 434-amino-acid chain: ATP-dependent protease ATPase subunit HslU (434 aa).

Residues Ile-18, 60–65, Asp-247, Glu-312, and Arg-384 contribute to the ATP site; that span reads GVGKTE.

It belongs to the ClpX chaperone family. HslU subfamily. A double ring-shaped homohexamer of HslV is capped on each side by a ring-shaped HslU homohexamer. The assembly of the HslU/HslV complex is dependent on binding of ATP.

It localises to the cytoplasm. In terms of biological role, ATPase subunit of a proteasome-like degradation complex; this subunit has chaperone activity. The binding of ATP and its subsequent hydrolysis by HslU are essential for unfolding of protein substrates subsequently hydrolyzed by HslV. HslU recognizes the N-terminal part of its protein substrates and unfolds these before they are guided to HslV for hydrolysis. The polypeptide is ATP-dependent protease ATPase subunit HslU (Brucella suis (strain ATCC 23445 / NCTC 10510)).